We begin with the raw amino-acid sequence, 454 residues long: UDP-N-acetylmuramate--L-alanine ligase (454 aa).

An ATP-binding site is contributed by 112–118; the sequence is GTHGKTT.

The protein belongs to the MurCDEF family.

It is found in the cytoplasm. It catalyses the reaction UDP-N-acetyl-alpha-D-muramate + L-alanine + ATP = UDP-N-acetyl-alpha-D-muramoyl-L-alanine + ADP + phosphate + H(+). It functions in the pathway cell wall biogenesis; peptidoglycan biosynthesis. Its function is as follows. Cell wall formation. The chain is UDP-N-acetylmuramate--L-alanine ligase from Nitratidesulfovibrio vulgaris (strain ATCC 29579 / DSM 644 / CCUG 34227 / NCIMB 8303 / VKM B-1760 / Hildenborough) (Desulfovibrio vulgaris).